The following is a 456-amino-acid chain: Glycosyl hydrolase family 109 protein 2 (456 aa).

Residues 1–33 (MSGFDRRSFLKASMVTAAATALAACASSERATG) constitute a signal peptide (tat-type signal). Residues 63 to 64 (ER), Asp-85, 134 to 137 (WAWH), 154 to 155 (EV), and Asn-183 each bind NAD(+). Residues Tyr-212, Arg-231, 243–246 (YPTH), and Tyr-325 contribute to the substrate site. An NAD(+)-binding site is contributed by Tyr-243.

The protein belongs to the Gfo/Idh/MocA family. Glycosyl hydrolase 109 subfamily. NAD(+) serves as cofactor. In terms of processing, predicted to be exported by the Tat system. The position of the signal peptide cleavage has not been experimentally proven.

Its function is as follows. Glycosidase. The sequence is that of Glycosyl hydrolase family 109 protein 2 from Shewanella sp. (strain ANA-3).